A 117-amino-acid chain; its full sequence is Large ribosomal subunit protein bL20 (117 aa).

Belongs to the bacterial ribosomal protein bL20 family.

Its function is as follows. Binds directly to 23S ribosomal RNA and is necessary for the in vitro assembly process of the 50S ribosomal subunit. It is not involved in the protein synthesizing functions of that subunit. The protein is Large ribosomal subunit protein bL20 of Mesomycoplasma hyopneumoniae (strain 7448) (Mycoplasma hyopneumoniae).